The sequence spans 101 residues: Urease subunit beta (101 aa).

Belongs to the urease beta subunit family. As to quaternary structure, heterotrimer of UreA (gamma), UreB (beta) and UreC (alpha) subunits. Three heterotrimers associate to form the active enzyme.

It is found in the cytoplasm. The catalysed reaction is urea + 2 H2O + H(+) = hydrogencarbonate + 2 NH4(+). The protein operates within nitrogen metabolism; urea degradation; CO(2) and NH(3) from urea (urease route): step 1/1. The protein is Urease subunit beta of Pseudomonas fluorescens (strain SBW25).